The primary structure comprises 505 residues: MGRFAAALVGSLFWLGLLLCGLGSLASAEPRAPPNRIAIVGAGIGGTSSAYYLRKKFGKDVKIDVFEREEVGGRLATLKVQGHDYEAGGSVIHPLNLHMKRFVKELGLSSVPASGGLVGVYNGKSLVFEESSWFVINVIKLVWRYGFQSLRMHMWVEDLLDKFMRIYRYQSHDYAFSSVEKLMHAIGGDDYVRLLNQTLRENLKKAGFSETFLNEMIAPVMKVNYGQSTDINAFVGAVSLTAADSNLWAVEGGNKIVCSGLLQASSSNLISGSVMSIEEKTRTKQTGNPTKMYEVVYKTGSETHSDFYDIVLVAAPLNRKMSNITFRNFDPPIEEFNDPYQQLVTTFIKGELNSTLFSSRPKDQFGLSAILVTDDSDMFINSLSIVASVRQKEGPPPAVDGMHVWKTFSRDILTKEQISKLFLSYDYAVRKPWLSYPHYEPPQKCPSIILHDRLYYLNGIEFAASCMEMSAIAGYNAALLAYHRWNGNEDMIDQDDLYERLKTEL.

The signal sequence occupies residues 1 to 28 (MGRFAAALVGSLFWLGLLLCGLGSLASA). Residues asparagine 196, asparagine 323, and asparagine 353 are each glycosylated (N-linked (GlcNAc...) asparagine).

The protein belongs to the prenylcysteine oxidase family. FAD is required as a cofactor. In terms of tissue distribution, highly expressed in the liver, kidney, heart and brain.

The protein resides in the lysosome. It catalyses the reaction an S-polyprenyl-L-cysteine + O2 + H2O = a polyprenal + L-cysteine + H2O2. It carries out the reaction S-(2E,6E)-farnesyl-L-cysteine + O2 + H2O = (2E,6E)-farnesal + L-cysteine + H2O2. The enzyme catalyses [(2E,6E,10E)-geranylgeranyl]-L-cysteine + O2 + H2O = (2E,6E,10E)-geranylgeranial + L-cysteine + H2O2. In terms of biological role, prenylcysteine oxidase that cleaves the thioether bond of prenyl-L-cysteines, such as farnesylcysteine and geranylgeranylcysteine. Only active against free prenylcysteines and not prenylcysteine residues within prenylated proteins or peptides. Involved in the final step in the degradation of prenylated proteins, by degrading prenylcysteines after the protein has been degraded. The protein is Prenylcysteine oxidase 1 of Mus musculus (Mouse).